The sequence spans 241 residues: Glutathione S-transferase omega-1 (241 aa).

N-acetylserine is present on Ser-2. Residues Gly-22–Lys-101 enclose the GST N-terminal domain. Cys-32 functions as the Nucleophile in the catalytic mechanism. Lys-57 bears the N6-acetyllysine mark. Residues Lys-59, Val-72, and Glu-85–Ser-86 each bind glutathione. One can recognise a GST C-terminal domain in the interval Asp-106–Leu-228. A Phosphoserine modification is found at Ser-129. 3 positions are modified to N6-acetyllysine: Lys-143, Lys-148, and Lys-152.

It belongs to the GST superfamily. Omega family. As to quaternary structure, homodimer.

Its subcellular location is the cytoplasm. The protein localises to the cytosol. It catalyses the reaction RX + glutathione = an S-substituted glutathione + a halide anion + H(+). The enzyme catalyses L-dehydroascorbate + 2 glutathione = glutathione disulfide + L-ascorbate. It carries out the reaction methylarsonate + 2 glutathione + H(+) = methylarsonous acid + glutathione disulfide + H2O. Functionally, exhibits glutathione-dependent thiol transferase and dehydroascorbate reductase activities. Has S-(phenacyl)glutathione reductase activity. Also has glutathione S-transferase activity. Participates in the biotransformation of inorganic arsenic and reduces monomethylarsonic acid (MMA) and dimethylarsonic acid. This is Glutathione S-transferase omega-1 (Gsto1) from Rattus norvegicus (Rat).